The chain runs to 79 residues: MKNLEIILQSSKMIGSGLATSGLIGAGAGVGIVFGCLILAFSRNPNLQKELFSYALIGFALTEAIGLLALVMAFLILFI.

2 helical membrane passes run Ser-21–Phe-41 and Phe-59–Ile-79.

Belongs to the ATPase C chain family. As to quaternary structure, F-type ATPases have 2 components, CF(1) - the catalytic core - and CF(0) - the membrane proton channel. CF(1) has five subunits: alpha(3), beta(3), gamma(1), delta(1), epsilon(1). CF(0) has three main subunits: a, b and c.

The protein resides in the mitochondrion membrane. Mitochondrial membrane ATP synthase (F(1)F(0) ATP synthase or Complex V) produces ATP from ADP in the presence of a proton gradient across the membrane which is generated by electron transport complexes of the respiratory chain. F-type ATPases consist of two structural domains, F(1) - containing the extramembraneous catalytic core and F(0) - containing the membrane proton channel, linked together by a central stalk and a peripheral stalk. During catalysis, ATP synthesis in the catalytic domain of F(1) is coupled via a rotary mechanism of the central stalk subunits to proton translocation. Part of the complex F(0) domain. A homomeric c-ring of probably 10 subunits is part of the complex rotary element. The chain is ATP synthase subunit 9, mitochondrial (ATP9) from Acanthamoeba castellanii (Amoeba).